Consider the following 186-residue polypeptide: Potassium-transporting ATPase KdpC subunit (186 aa).

The helical transmembrane segment at 10–30 (LTIITMVLCGFLFPLAITLIG) threads the bilayer.

This sequence belongs to the KdpC family. As to quaternary structure, the system is composed of three essential subunits: KdpA, KdpB and KdpC.

The protein localises to the cell membrane. Its function is as follows. Part of the high-affinity ATP-driven potassium transport (or Kdp) system, which catalyzes the hydrolysis of ATP coupled with the electrogenic transport of potassium into the cytoplasm. This subunit acts as a catalytic chaperone that increases the ATP-binding affinity of the ATP-hydrolyzing subunit KdpB by the formation of a transient KdpB/KdpC/ATP ternary complex. The chain is Potassium-transporting ATPase KdpC subunit from Staphylococcus aureus (strain COL).